Consider the following 166-residue polypeptide: Putative 4-hydroxy-4-methyl-2-oxoglutarate aldolase (166 aa).

Substrate-binding positions include glycine 74 to isoleucine 77 and arginine 96. Aspartate 97 provides a ligand contact to a divalent metal cation.

Belongs to the class II aldolase/RraA-like family. Homotrimer. The cofactor is a divalent metal cation.

It carries out the reaction 4-hydroxy-4-methyl-2-oxoglutarate = 2 pyruvate. The catalysed reaction is oxaloacetate + H(+) = pyruvate + CO2. Functionally, catalyzes the aldol cleavage of 4-hydroxy-4-methyl-2-oxoglutarate (HMG) into 2 molecules of pyruvate. Also contains a secondary oxaloacetate (OAA) decarboxylase activity due to the common pyruvate enolate transition state formed following C-C bond cleavage in the retro-aldol and decarboxylation reactions. The chain is Putative 4-hydroxy-4-methyl-2-oxoglutarate aldolase from Xanthomonas axonopodis pv. citri (strain 306).